A 170-amino-acid chain; its full sequence is Shikimate kinase (170 aa).

G11–T16 is an ATP binding site. Residue T15 participates in Mg(2+) binding. Residues D33, R57, and G80 each contribute to the substrate site. R119 provides a ligand contact to ATP. R141 lines the substrate pocket.

Belongs to the shikimate kinase family. As to quaternary structure, monomer. The cofactor is Mg(2+).

The protein localises to the cytoplasm. It carries out the reaction shikimate + ATP = 3-phosphoshikimate + ADP + H(+). Its pathway is metabolic intermediate biosynthesis; chorismate biosynthesis; chorismate from D-erythrose 4-phosphate and phosphoenolpyruvate: step 5/7. Catalyzes the specific phosphorylation of the 3-hydroxyl group of shikimic acid using ATP as a cosubstrate. The sequence is that of Shikimate kinase from Azobacteroides pseudotrichonymphae genomovar. CFP2.